We begin with the raw amino-acid sequence, 570 residues long: Probable electron transfer flavoprotein-ubiquinone oxidoreductase (570 aa).

13-27 contacts FAD; the sequence is VVIVGAGPAGLSAAI. C515, C539, C542, and C545 together coordinate [4Fe-4S] cluster. The 4Fe-4S ferredoxin-type domain occupies 530–559; sequence KRFQINAANCVHCKTCDIKDPSQNITWVTP.

It depends on [4Fe-4S] cluster as a cofactor. FAD is required as a cofactor.

The catalysed reaction is a ubiquinone + reduced [electron-transfer flavoprotein] = a ubiquinol + oxidized [electron-transfer flavoprotein] + H(+). Its function is as follows. Accepts electrons from ETF and reduces ubiquinone. The chain is Probable electron transfer flavoprotein-ubiquinone oxidoreductase (etfD) from Acinetobacter baylyi (strain ATCC 33305 / BD413 / ADP1).